A 1083-amino-acid polypeptide reads, in one-letter code: Error-prone DNA polymerase (1083 aa).

The protein belongs to the DNA polymerase type-C family. DnaE2 subfamily.

It localises to the cytoplasm. The catalysed reaction is DNA(n) + a 2'-deoxyribonucleoside 5'-triphosphate = DNA(n+1) + diphosphate. Functionally, DNA polymerase involved in damage-induced mutagenesis and translesion synthesis (TLS). It is not the major replicative DNA polymerase. This Xanthomonas oryzae pv. oryzae (strain KACC10331 / KXO85) protein is Error-prone DNA polymerase.